The primary structure comprises 133 residues: Small ribosomal subunit protein uS12c (133 aa).

The protein belongs to the universal ribosomal protein uS12 family. Part of the 30S ribosomal subunit.

Its subcellular location is the plastid. It localises to the chloroplast. Its function is as follows. With S4 and S5 plays an important role in translational accuracy. Located at the interface of the 30S and 50S subunits. The polypeptide is Small ribosomal subunit protein uS12c (rps12) (Chlamydomonas reinhardtii (Chlamydomonas smithii)).